Consider the following 359-residue polypeptide: Small ribosomal subunit biogenesis GTPase RsgA (359 aa).

Positions 101-259 (KRKGSQAIAS…LMDNPGIREV (159 aa)) constitute a CP-type G domain. GTP-binding positions include 149-152 (NKKD) and 201-209 (GSSGAGKST). Zn(2+) contacts are provided by Cys-284, Cys-289, His-291, and Cys-297. The interval 331-359 (DPEEARKKKQKDKQMSKALQKRLKDKGRK) is disordered. The segment covering 349 to 359 (LQKRLKDKGRK) has biased composition (basic residues).

This sequence belongs to the TRAFAC class YlqF/YawG GTPase family. RsgA subfamily. Monomer. Associates with 30S ribosomal subunit, binds 16S rRNA. Zn(2+) serves as cofactor.

The protein resides in the cytoplasm. In terms of biological role, one of several proteins that assist in the late maturation steps of the functional core of the 30S ribosomal subunit. Helps release RbfA from mature subunits. May play a role in the assembly of ribosomal proteins into the subunit. Circularly permuted GTPase that catalyzes slow GTP hydrolysis, GTPase activity is stimulated by the 30S ribosomal subunit. The chain is Small ribosomal subunit biogenesis GTPase RsgA from Leptospira interrogans serogroup Icterohaemorrhagiae serovar Lai (strain 56601).